Here is a 230-residue protein sequence, read N- to C-terminus: Large ribosomal subunit protein uL1c (230 aa).

Belongs to the universal ribosomal protein uL1 family. Part of the 50S ribosomal subunit.

It is found in the plastid. Its subcellular location is the chloroplast. Its function is as follows. Binds directly to 23S rRNA. Might be involved in E site tRNA release (Potential). This is Large ribosomal subunit protein uL1c (rpl1) from Thalassiosira pseudonana (Marine diatom).